A 463-amino-acid chain; its full sequence is Stress-activated protein kinase jnk-1 (463 aa).

A compositionally biased stretch (polar residues) spans 1 to 12; the sequence is MEERLSTTSSYP. The tract at residues 1-23 is disordered; sequence MEERLSTTSSYPSHPGRSVEEDH. One can recognise a Protein kinase domain in the interval 119-412; the sequence is YQNLRLIGSG…ISVDDALRHP (294 aa). ATP is bound by residues 126–131 and Lys148; that span reads GSGAQG. Asp244 functions as the Proton acceptor in the catalytic mechanism. A Phosphothreonine modification is found at Thr276. A TXY motif is present at residues 276–278; sequence TPY. Tyr278 is subject to Phosphotyrosine.

This sequence belongs to the protein kinase superfamily. CMGC Ser/Thr protein kinase family. MAP kinase subfamily. In terms of assembly, binds to the scaffolding protein, unc-16. Unc-16 also binds other components of the JNK signaling pathway. Interacts with daf-16. Requires Mg(2+) as cofactor. Dually phosphorylated on Thr-276 and Tyr-278, which activates the enzyme. In terms of tissue distribution, expressed in most neurons, including nerve ring, head ganglions, dorsal and ventral nerve cords and tail ganglions. The Thr-276/Tyr-278 phosphorylated form is present in the nerve ring upon heat exposure.

It localises to the cytoplasm. The protein localises to the perikaryon. It is found in the cell projection. Its subcellular location is the axon. It catalyses the reaction L-seryl-[protein] + ATP = O-phospho-L-seryl-[protein] + ADP + H(+). It carries out the reaction L-threonyl-[protein] + ATP = O-phospho-L-threonyl-[protein] + ADP + H(+). With respect to regulation, activated by threonine and tyrosine phosphorylation by either of the dual specificity kinases, jkk-1 and mek-1. Serine/threonine-protein kinase which responds to activation by environmental stress by phosphorylating a number of transcription factors such as daf-16, and thus regulates transcriptional activity. By phosphorylating daf-16, plays a role in daf-16 nuclear translocation in intestinal cells in response to environmental stresses such as heat and oxidative stresses. Downstream of jkk-1, may coordinate locomotion via type-D GABAergic motoneurons and regulates synaptic vesicle transport in conjunction with unc-16. Independently of jkk-1, may regulate some mechanosensory responses, such as response to touch. Independently of jkk-1 and downstream of mek-1, plays a role in resistance to heavy metals, such as Cu(2+) or Cd(2+). Regulates germline cell apoptosis in response to heavy metals such as Cu(2+) and arsenite. Required for dopaminergic CEP neuron degeneration in response to Mn(2+). Required for normal sleep bout quantity and arousal thresholds during the transition from the last larval stage to adulthood in well-fed animals. Downstream of jkk-1 but independently of mek-1, positively regulates lifespan. The protein is Stress-activated protein kinase jnk-1 (jnk-1) of Caenorhabditis elegans.